The sequence spans 215 residues: MKQLDYLRTVPRSGTGAPSVYLTFDDGPNPVFTPEVLDVLAEHRVPATFFVIGAYAKDRPQLIRRMVAQGHEVANHTMTHPDLSACGRRDVERQVLEANRAIRMACPEASVRHIRAPYGIWSDDVLTTSANAGLAAVHWSVDPRDWSRPGIDAIVDAVLASVRPGSIILLHDGCPPDELANTDASFRDQTVAALSRLIPALHDRGFIIRSLPQNH.

The 192-residue stretch at 18-209 folds into the NodB homology domain; the sequence is PSVYLTFDDG…ALHDRGFIIR (192 aa). Asp-25 (proton acceptor) is an active-site residue. The a divalent metal cation site is built by His-76 and His-80. Catalysis depends on His-171, which acts as the Proton donor.

It belongs to the polysaccharide deacetylase family.

The protein resides in the cytoplasm. Is involved in generating a small heat-stable compound (Nod), an acylated oligomer of N-acetylglucosamine, that stimulates mitosis in various plant protoplasts. In Sinorhizobium fredii (strain NBRC 101917 / NGR234), this protein is Chitooligosaccharide deacetylase (nodB).